Here is a 151-residue protein sequence, read N- to C-terminus: Calmodulin (151 aa).

4 consecutive EF-hand domains span residues 10–45, 46–81, 83–118, and 119–151; these read EQIS…LGQN, PTEA…KMKD, DSEE…LGEK, and LTDE…MLSK. Ca(2+)-binding residues include Asp23, Asp25, Asp27, Ser29, Glu34, Asp59, Asp61, Asn63, Thr65, Glu70, Asp96, Asp98, Asn100, Glu107, Asp132, Asp134, Asp136, and Glu143.

This sequence belongs to the calmodulin family.

Its function is as follows. Calmodulin mediates the control of a large number of enzymes, ion channels and other proteins by Ca(2+). Among the enzymes to be stimulated by the calmodulin-Ca(2+) complex are a number of protein kinases and phosphatases. The sequence is that of Calmodulin from Pneumocystis carinii.